A 428-amino-acid polypeptide reads, in one-letter code: Sulfite exporter TauE/SafE family protein 6 (428 aa).

Helical transmembrane passes span 1-21, 61-81, 82-102, 105-125, 128-148, 149-169, 245-265, 294-314, 332-352, 356-376, and 388-408; these read MKTL…NANQ, ALVV…ASGI, GDGF…LKAA, FSAF…HFGC, LIDY…VSVG, VICN…VFLM, YWIL…LALS, VMSF…GMII, TSFM…LLGM, EAAY…LVFA, and IIVF…ASFG.

It belongs to the 4-toluene sulfonate uptake permease (TSUP) (TC 2.A.102) family.

It localises to the membrane. The polypeptide is Sulfite exporter TauE/SafE family protein 6 (Arabidopsis thaliana (Mouse-ear cress)).